Reading from the N-terminus, the 446-residue chain is Tubulin beta-4 chain (446 aa).

8 residues coordinate GTP: Q11, E69, S138, G142, T143, G144, N204, and N226. Residue E69 coordinates Mg(2+). Residues 417–426 (DLVSEYQQYQ) are compositionally biased toward polar residues. The interval 417-446 (DLVSEYQQYQDATADEEGDYEDEDEALHDE) is disordered. Residues 429 to 446 (TADEEGDYEDEDEALHDE) are compositionally biased toward acidic residues.

The protein belongs to the tubulin family. Dimer of alpha and beta chains. A typical microtubule is a hollow water-filled tube with an outer diameter of 25 nm and an inner diameter of 15 nM. Alpha-beta heterodimers associate head-to-tail to form protofilaments running lengthwise along the microtubule wall with the beta-tubulin subunit facing the microtubule plus end conferring a structural polarity. Microtubules usually have 13 protofilaments but different protofilament numbers can be found in some organisms and specialized cells. Mg(2+) serves as cofactor.

The protein resides in the cytoplasm. The protein localises to the cytoskeleton. Its function is as follows. Tubulin is the major constituent of microtubules, a cylinder consisting of laterally associated linear protofilaments composed of alpha- and beta-tubulin heterodimers. Microtubules grow by the addition of GTP-tubulin dimers to the microtubule end, where a stabilizing cap forms. Below the cap, tubulin dimers are in GDP-bound state, owing to GTPase activity of alpha-tubulin. In Eleusine indica (Goosegrass), this protein is Tubulin beta-4 chain (TUBB4).